A 378-amino-acid chain; its full sequence is D-alanine--D-alanine ligase (378 aa).

An ATP-grasp domain is found at 149–374; the sequence is KVLLAAAGIP…YTDLITKLIE (226 aa). 189–247 serves as a coordination point for ATP; that stretch reads EAGLQYPLFVKPSRAGSSFGVTKVEHEGDAAELAAAVYEASRHDWRILVEQGIDAREIE. Asp-328, Glu-341, and Asn-343 together coordinate Mg(2+).

It belongs to the D-alanine--D-alanine ligase family. It depends on Mg(2+) as a cofactor. The cofactor is Mn(2+).

The protein localises to the cytoplasm. It catalyses the reaction 2 D-alanine + ATP = D-alanyl-D-alanine + ADP + phosphate + H(+). It functions in the pathway cell wall biogenesis; peptidoglycan biosynthesis. In terms of biological role, cell wall formation. This is D-alanine--D-alanine ligase from Bifidobacterium adolescentis (strain ATCC 15703 / DSM 20083 / NCTC 11814 / E194a).